Reading from the N-terminus, the 1098-residue chain is PAN2-PAN3 deadenylation complex catalytic subunit PAN2 (1098 aa).

WD repeat units lie at residues 19 to 58, 150 to 190, 253 to 293, and 300 to 338; these read ASKD…PFQL, TGFD…SVKS, PFPN…KLNV, and PASP…NFVN. A linker region spans residues 340-466; that stretch reads PAPLEEQDIP…SIFHLKSPTS (127 aa). The interval 417-442 is disordered; the sequence is RNISQPYQSLREPPGSNSNAPRFISE. In terms of domain architecture, USP spans 466–839; that stretch reads SVPHCYSRLQ…KPVIIVYSEP (374 aa). The region spanning 894-1067 is the Exonuclease domain; the sequence is IAIDAEFVVS…EDAYTALMLF (174 aa). A divalent metal cation is bound by residues Asp897, Glu899, Asp1006, and Asp1059.

The protein belongs to the peptidase C19 family. PAN2 subfamily. In terms of assembly, forms a heterotrimer with an asymmetric homodimer of the regulatory subunit PAN3 to form the poly(A)-nuclease (PAN) deadenylation complex. The cofactor is a divalent metal cation.

Its subcellular location is the cytoplasm. It catalyses the reaction Exonucleolytic cleavage of poly(A) to 5'-AMP.. Positively regulated by the regulatory subunit PAN3. In terms of biological role, catalytic subunit of the poly(A)-nuclease (PAN) deadenylation complex, one of two cytoplasmic mRNA deadenylases involved in mRNA turnover. PAN specifically shortens poly(A) tails of RNA and the activity is stimulated by poly(A)-binding protein PAB1. PAN deadenylation is followed by rapid degradation of the shortened mRNA tails by the CCR4-NOT complex. Deadenylated mRNAs are then degraded by two alternative mechanisms, namely exosome-mediated 3'-5' exonucleolytic degradation, or deadenylation-dependent mRNA decaping and subsequent 5'-3' exonucleolytic degradation by XRN1. May also be involved in post-transcriptional maturation of mRNA poly(A) tails. This chain is PAN2-PAN3 deadenylation complex catalytic subunit PAN2, found in Meyerozyma guilliermondii (strain ATCC 6260 / CBS 566 / DSM 6381 / JCM 1539 / NBRC 10279 / NRRL Y-324) (Yeast).